Here is a 373-residue protein sequence, read N- to C-terminus: Probable tRNA sulfurtransferase (373 aa).

A THUMP domain is found at 54 to 158 (NKNIEELSKV…NDVAYFYHKI (105 aa)). ATP is bound by residues 176 to 177 (LF), 201 to 202 (NF), lysine 256, glycine 278, and glutamine 287.

The protein belongs to the ThiI family.

Its subcellular location is the cytoplasm. It carries out the reaction [ThiI sulfur-carrier protein]-S-sulfanyl-L-cysteine + a uridine in tRNA + 2 reduced [2Fe-2S]-[ferredoxin] + ATP + H(+) = [ThiI sulfur-carrier protein]-L-cysteine + a 4-thiouridine in tRNA + 2 oxidized [2Fe-2S]-[ferredoxin] + AMP + diphosphate. The enzyme catalyses [ThiS sulfur-carrier protein]-C-terminal Gly-Gly-AMP + S-sulfanyl-L-cysteinyl-[cysteine desulfurase] + AH2 = [ThiS sulfur-carrier protein]-C-terminal-Gly-aminoethanethioate + L-cysteinyl-[cysteine desulfurase] + A + AMP + 2 H(+). It functions in the pathway cofactor biosynthesis; thiamine diphosphate biosynthesis. In terms of biological role, catalyzes the ATP-dependent transfer of a sulfur to tRNA to produce 4-thiouridine in position 8 of tRNAs, which functions as a near-UV photosensor. Also catalyzes the transfer of sulfur to the sulfur carrier protein ThiS, forming ThiS-thiocarboxylate. This is a step in the synthesis of thiazole, in the thiamine biosynthesis pathway. The sulfur is donated as persulfide by IscS. The polypeptide is Probable tRNA sulfurtransferase (Saccharolobus islandicus (strain M.16.4 / Kamchatka #3) (Sulfolobus islandicus)).